Here is an 88-residue protein sequence, read N- to C-terminus: Small ribosomal subunit protein uS19 (88 aa).

The protein belongs to the universal ribosomal protein uS19 family.

Protein S19 forms a complex with S13 that binds strongly to the 16S ribosomal RNA. The sequence is that of Small ribosomal subunit protein uS19 (rpsS) from Chlamydia pneumoniae (Chlamydophila pneumoniae).